A 67-amino-acid polypeptide reads, in one-letter code: DNA gyrase inhibitor YacG (67 aa).

Positions 10, 13, 29, and 33 each coordinate Zn(2+).

This sequence belongs to the DNA gyrase inhibitor YacG family. As to quaternary structure, interacts with GyrB. It depends on Zn(2+) as a cofactor.

Its function is as follows. Inhibits all the catalytic activities of DNA gyrase by preventing its interaction with DNA. Acts by binding directly to the C-terminal domain of GyrB, which probably disrupts DNA binding by the gyrase. The sequence is that of DNA gyrase inhibitor YacG from Pasteurella multocida (strain Pm70).